The following is a 120-amino-acid chain: Large ribosomal subunit protein uL18 (120 aa).

Belongs to the universal ribosomal protein uL18 family. Part of the 50S ribosomal subunit; part of the 5S rRNA/L5/L18/L25 subcomplex. Contacts the 5S and 23S rRNAs.

This is one of the proteins that bind and probably mediate the attachment of the 5S RNA into the large ribosomal subunit, where it forms part of the central protuberance. In Trichodesmium erythraeum (strain IMS101), this protein is Large ribosomal subunit protein uL18.